The following is a 231-amino-acid chain: Protein RhiA (231 aa).

Functionally, may be involved in plant-microbe interaction. This Rhizobium leguminosarum bv. viciae protein is Protein RhiA (rhiA).